A 177-amino-acid polypeptide reads, in one-letter code: Large ribosomal subunit protein uL6 (177 aa).

Belongs to the universal ribosomal protein uL6 family. As to quaternary structure, part of the 50S ribosomal subunit.

Its function is as follows. This protein binds to the 23S rRNA, and is important in its secondary structure. It is located near the subunit interface in the base of the L7/L12 stalk, and near the tRNA binding site of the peptidyltransferase center. In Methylobacterium nodulans (strain LMG 21967 / CNCM I-2342 / ORS 2060), this protein is Large ribosomal subunit protein uL6.